The primary structure comprises 301 residues: N-acetylmuramic acid 6-phosphate etherase (301 aa).

Residues 57-220 form the SIS domain; that stretch reads IAETFMKNGR…TTGAMIKTGK (164 aa). The Proton donor role is filled by Glu85. Glu116 is an active-site residue.

It belongs to the GCKR-like family. MurNAc-6-P etherase subfamily. In terms of assembly, homodimer.

It catalyses the reaction N-acetyl-D-muramate 6-phosphate + H2O = N-acetyl-D-glucosamine 6-phosphate + (R)-lactate. It participates in amino-sugar metabolism; 1,6-anhydro-N-acetylmuramate degradation. The protein operates within amino-sugar metabolism; N-acetylmuramate degradation. It functions in the pathway cell wall biogenesis; peptidoglycan recycling. Specifically catalyzes the cleavage of the D-lactyl ether substituent of MurNAc 6-phosphate, producing GlcNAc 6-phosphate and D-lactate. Together with AnmK, is also required for the utilization of anhydro-N-acetylmuramic acid (anhMurNAc) either imported from the medium or derived from its own cell wall murein, and thus plays a role in cell wall recycling. This chain is N-acetylmuramic acid 6-phosphate etherase, found in Pasteurella multocida (strain Pm70).